The sequence spans 193 residues: ATP-dependent Clp protease proteolytic subunit (193 aa).

S98 functions as the Nucleophile in the catalytic mechanism. H123 is a catalytic residue.

The protein belongs to the peptidase S14 family. As to quaternary structure, fourteen ClpP subunits assemble into 2 heptameric rings which stack back to back to give a disk-like structure with a central cavity, resembling the structure of eukaryotic proteasomes.

The protein resides in the cytoplasm. It catalyses the reaction Hydrolysis of proteins to small peptides in the presence of ATP and magnesium. alpha-casein is the usual test substrate. In the absence of ATP, only oligopeptides shorter than five residues are hydrolyzed (such as succinyl-Leu-Tyr-|-NHMec, and Leu-Tyr-Leu-|-Tyr-Trp, in which cleavage of the -Tyr-|-Leu- and -Tyr-|-Trp bonds also occurs).. Cleaves peptides in various proteins in a process that requires ATP hydrolysis. Has a chymotrypsin-like activity. Plays a major role in the degradation of misfolded proteins. The protein is ATP-dependent Clp protease proteolytic subunit of Glaesserella parasuis serovar 5 (strain SH0165) (Haemophilus parasuis).